The chain runs to 338 residues: Tagatose 1,6-diphosphate aldolase (338 aa).

Belongs to the aldolase LacD family.

It carries out the reaction D-tagatofuranose 1,6-bisphosphate = D-glyceraldehyde 3-phosphate + dihydroxyacetone phosphate. It functions in the pathway carbohydrate metabolism; D-tagatose 6-phosphate degradation; D-glyceraldehyde 3-phosphate and glycerone phosphate from D-tagatose 6-phosphate: step 2/2. This Listeria monocytogenes serovar 1/2a (strain ATCC BAA-679 / EGD-e) protein is Tagatose 1,6-diphosphate aldolase.